Consider the following 177-residue polypeptide: CRIB domain-containing protein RIC8 (177 aa).

One can recognise a CRIB domain in the interval 17–30 (IGTPTDVKHVAHIG). Positions 72–89 (STRSRDIPRLPKSSRERS) are enriched in basic and acidic residues. The disordered stretch occupies residues 72-177 (STRSRDIPRL…SSTSDAGYLT (106 aa)). Residues 158-171 (GSQVESISDSSSTS) are compositionally biased toward low complexity.

Its function is as follows. Functions as a downstream effector of Rho-related GTP binding proteins of the 'Rho of Plants' (ROPs) family. Participates in the propagation of ROP GTPase signals in specific cellular responses. The chain is CRIB domain-containing protein RIC8 (RIC8) from Arabidopsis thaliana (Mouse-ear cress).